We begin with the raw amino-acid sequence, 376 residues long: Chaperone protein DnaJ (376 aa).

Residues 5-70 enclose the J domain; sequence DYYEVLGVGR…DKKAAYDQFG (66 aa). The CR-type zinc-finger motif lies at 132 to 210; it reads GLTKELRIPT…CHGDGRVEKS (79 aa). Residues C145, C148, C162, C165, C184, C187, C198, and C201 each coordinate Zn(2+). 4 CXXCXGXG motif repeats span residues 145 to 152, 162 to 169, 184 to 191, and 198 to 205; these read CDLCDGSG, CTTCHGQG, CPTCHGRG, and CSKCHGDG.

The protein belongs to the DnaJ family. As to quaternary structure, homodimer. The cofactor is Zn(2+).

The protein localises to the cytoplasm. Participates actively in the response to hyperosmotic and heat shock by preventing the aggregation of stress-denatured proteins and by disaggregating proteins, also in an autonomous, DnaK-independent fashion. Unfolded proteins bind initially to DnaJ; upon interaction with the DnaJ-bound protein, DnaK hydrolyzes its bound ATP, resulting in the formation of a stable complex. GrpE releases ADP from DnaK; ATP binding to DnaK triggers the release of the substrate protein, thus completing the reaction cycle. Several rounds of ATP-dependent interactions between DnaJ, DnaK and GrpE are required for fully efficient folding. Also involved, together with DnaK and GrpE, in the DNA replication of plasmids through activation of initiation proteins. This Shewanella sp. (strain W3-18-1) protein is Chaperone protein DnaJ.